Reading from the N-terminus, the 428-residue chain is Probable oxidoreductase OrdL (428 aa).

In Rhizobium meliloti (strain 1021) (Ensifer meliloti), this protein is Probable oxidoreductase OrdL (ordL).